An 89-amino-acid polypeptide reads, in one-letter code: UPF0237 protein CA_C0478 (89 aa).

Residues 4 to 78 form the ACT domain; it reads IITVIGKDKV…KKLGVSIKIQ (75 aa).

It belongs to the UPF0237 family.

In Clostridium acetobutylicum (strain ATCC 824 / DSM 792 / JCM 1419 / IAM 19013 / LMG 5710 / NBRC 13948 / NRRL B-527 / VKM B-1787 / 2291 / W), this protein is UPF0237 protein CA_C0478.